The following is a 76-amino-acid chain: Omega-conotoxin-like TeAr94 (76 aa).

The first 22 residues, 1-22 (MKLTCMMIVAVLFLTAWTFVTA), serve as a signal peptide directing secretion. The propeptide occupies 23–50 (VPHSSNALENLYLKAHHEMNNPEDSELN). 3 disulfides stabilise this stretch: cysteine 53/cysteine 67, cysteine 60/cysteine 71, and cysteine 66/cysteine 75.

Belongs to the conotoxin O1 superfamily. In terms of tissue distribution, expressed by the venom duct.

It localises to the secreted. Functionally, omega-conotoxins act at presynaptic membranes, they bind and block voltage-gated calcium channels. The chain is Omega-conotoxin-like TeAr94 from Conus textile (Cloth-of-gold cone).